The following is a 364-amino-acid chain: Developmentally-regulated GTP-binding protein 2 (364 aa).

Lys-21 is modified ((3S)-3-hydroxylysine). In terms of domain architecture, OBG-type G spans Ala-63–Ala-288. GTP contacts are provided by residues Gly-69–Ser-76, Phe-94–Thr-98, Asp-115–Gly-118, Asn-246–Asp-249, and Ser-269–Gly-271. Mg(2+)-binding residues include Ser-76 and Thr-96. The TGS domain maps to Ala-288 to Lys-363.

It belongs to the TRAFAC class OBG-HflX-like GTPase superfamily. OBG GTPase family. As to quaternary structure, interacts with RWDD1; this interaction confers protection to polyubiquitination and proteolytic degradation. Interacts with JMJD7; this interaction is direct. Mg(2+) serves as cofactor. Post-translationally, polyubiquitinated. In terms of processing, hydroxylated (with S stereochemistry) at C-3 of Lys-21 by JMJD7.

The protein localises to the nucleus. The protein resides in the cytoplasm. It carries out the reaction GTP + H2O = GDP + phosphate + H(+). Catalyzes the conversion of GTP to GDP through hydrolysis of the gamma-phosphate bond in GTP. When hydroxylated at C-3 of 'Lys-21' by JMJD7, may bind to RNA and play a role in translation. In Bos taurus (Bovine), this protein is Developmentally-regulated GTP-binding protein 2 (DRG2).